The following is a 274-amino-acid chain: Hydroxyethylthiazole kinase (274 aa).

Position 51 (Met-51) interacts with substrate. 2 residues coordinate ATP: Arg-127 and Ser-173. Residue Gly-200 participates in substrate binding.

The protein belongs to the Thz kinase family. Mg(2+) serves as cofactor.

The catalysed reaction is 5-(2-hydroxyethyl)-4-methylthiazole + ATP = 4-methyl-5-(2-phosphooxyethyl)-thiazole + ADP + H(+). The protein operates within cofactor biosynthesis; thiamine diphosphate biosynthesis; 4-methyl-5-(2-phosphoethyl)-thiazole from 5-(2-hydroxyethyl)-4-methylthiazole: step 1/1. Its function is as follows. Catalyzes the phosphorylation of the hydroxyl group of 4-methyl-5-beta-hydroxyethylthiazole (THZ). This Photobacterium profundum (strain SS9) protein is Hydroxyethylthiazole kinase.